Here is a 141-residue protein sequence, read N- to C-terminus: HTH-type transcriptional repressor NsrR (141 aa).

Residues 2–129 enclose the HTH rrf2-type domain; it reads QLTSFTDYAL…DDCSIAELLD (128 aa). Residues 28–51 constitute a DNA-binding region (H-T-H motif); the sequence is ITDVTELFGVSRNHMVKVINRLGQ. The [2Fe-2S] cluster site is built by Cys91, Cys96, and Cys102.

The cofactor is [2Fe-2S] cluster.

In terms of biological role, nitric oxide-sensitive repressor of genes involved in protecting the cell against nitrosative stress. May require iron for activity. The sequence is that of HTH-type transcriptional repressor NsrR from Vibrio vulnificus (strain CMCP6).